The primary structure comprises 293 residues: Small ribosomal subunit protein uS3 (293 aa).

The region spanning 39-110 (IRREIMKFLK…KISIKIKEVK (72 aa)) is the KH type-2 domain.

The protein belongs to the universal ribosomal protein uS3 family. As to quaternary structure, part of the 30S ribosomal subunit. Forms a tight complex with proteins S10 and S14.

In terms of biological role, binds the lower part of the 30S subunit head. Binds mRNA in the 70S ribosome, positioning it for translation. This chain is Small ribosomal subunit protein uS3, found in Borreliella burgdorferi (strain ATCC 35210 / DSM 4680 / CIP 102532 / B31) (Borrelia burgdorferi).